The sequence spans 322 residues: MREPAFSFRLHLFAAMILLVDVFSALSITTQTFRNVQRHSTDRQLRARDSQAKNYVIRDEERMPLRKLPYDLNLSLSSPPVATLRTALELLYPQAGPSQLWHFEFVTQMKRELSVMQSHPKKLIFDQLIGAMRSMNRNMHMKWNHASDISELSPYTQLILPIALKLRQRLSEGASNDADWMSLLMRLIPYGFLRKEVELLLRTAGYDNVQNYIALYDQMLSKVSAEDTLKFQLLDSNIAPNFQELNKEFLYRSVSLLASKTDGVTADSIVQTTCWSFILIQLTKAKYPQDELQKILEDSMPAEKVVAVMKSYKEGFPNPAHR.

A signal peptide spans 1–25 (MREPAFSFRLHLFAAMILLVDVFSA). Residues 43–62 (RQLRARDSQAKNYVIRDEER) carry the RxLR-dEER motif. N73 carries N-linked (GlcNAc...) asparagine glycosylation.

Belongs to the RxLR effector family.

It is found in the secreted. It localises to the host cytoplasm. Its subcellular location is the host nucleus. In terms of biological role, secreted effector that suppresses pattern-triggered immunity (PTI) in plant host. The polypeptide is Secreted RxLR effector protein RXLR-C17 (Plasmopara halstedii (Downy mildew of sunflower)).